A 485-amino-acid polypeptide reads, in one-letter code: MSLFDLKLKDVHTKLHEKEISVSDLVDEAYKRIEQVDGQVEAFLALNEEKARAYAKELDAALDRSEARGLLFGIPIGVKDNIVTKNLRTTCSSRILGNFDPIYDATVVHKLREAQAVTIGKLNMDEFAMGSSTENSAFQKTKNPWNLEYVPGGSSGGSAAAVAAGEVPFTLGSDTGGSIRQPAAYCGVVGLKPTYGRVSRYGLVAFASSLDQIGPITRNVEDNAYLLQAISGHDPMDSTSANLDVPDYLSALTGDIKGLKIAVPKEYLGEGVKEEVKQSVLDALKVLEGLGATWEEVSLPHSKYALATYYLLASSEASANLARFDGVRYGFRSDNADNLLDMYKQTRAEGFGDEVKRRIMLGTFALSSGYYDAYYKKAQQVRTLIKQDFEKVFEQYDVIIGPTTPTPAFKIGEKTDDPLTMYANDILTIPVNLAGVPAISVPCGFDNGLPLGLQIIGKHFDEGSVYRVAHAFEQATDYHTKRPTL.

Active-site charge relay system residues include Lys79 and Ser154. Ser178 serves as the catalytic Acyl-ester intermediate.

This sequence belongs to the amidase family. GatA subfamily. Heterotrimer of A, B and C subunits.

It carries out the reaction L-glutamyl-tRNA(Gln) + L-glutamine + ATP + H2O = L-glutaminyl-tRNA(Gln) + L-glutamate + ADP + phosphate + H(+). In terms of biological role, allows the formation of correctly charged Gln-tRNA(Gln) through the transamidation of misacylated Glu-tRNA(Gln) in organisms which lack glutaminyl-tRNA synthetase. The reaction takes place in the presence of glutamine and ATP through an activated gamma-phospho-Glu-tRNA(Gln). This is Glutamyl-tRNA(Gln) amidotransferase subunit A (gatA) from Halalkalibacterium halodurans (strain ATCC BAA-125 / DSM 18197 / FERM 7344 / JCM 9153 / C-125) (Bacillus halodurans).